We begin with the raw amino-acid sequence, 684 residues long: Dipeptidyl-peptidase 5 (684 aa).

The first 24 residues, 1-24 (MNKKIFSMMAASIIGSAAMTPSAG), serve as a signal peptide directing secretion. 3 WD repeats span residues 87–127 (DTES…TERR), 220–259 (KPWS…DIYI), and 323–363 (TFDY…GKIR). Active-site charge relay system residues include Ser542, Asp627, and His659.

Belongs to the peptidase S9C family. In terms of assembly, homodimer.

The protein localises to the periplasm. Functionally, catalyzes the removal of dipeptides from the N-terminus of oligopeptides. Prefers Ala and hydrophobic residues except Pro at the P1 position, and has no preference for P2 residues. Shows high dipeptidyl peptidase activity toward the synthetic substrates Lys-Ala-, Gly-Phe-, Met-Leu-, and Ser-Tyr-methylcoumaryl-7-amide (MCA), and slowly hydrolyzes Val-Tyr-MCA. Is likely involved in amino acid metabolism and bacterial growth of asaccharolytic P.gingivalis, that utilizes amino acids from extracellular proteinaceous nutrients as energy and carbon sources. The sequence is that of Dipeptidyl-peptidase 5 from Porphyromonas gingivalis (strain ATCC 33277 / DSM 20709 / CIP 103683 / JCM 12257 / NCTC 11834 / 2561).